A 512-amino-acid chain; its full sequence is Glutamyl-tRNA(Gln) amidotransferase subunit A (512 aa).

Catalysis depends on charge relay system residues Lys-82 and Ser-157. Ser-181 functions as the Acyl-ester intermediate in the catalytic mechanism.

The protein belongs to the amidase family. GatA subfamily. In terms of assembly, heterotrimer of A, B and C subunits.

It catalyses the reaction L-glutamyl-tRNA(Gln) + L-glutamine + ATP + H2O = L-glutaminyl-tRNA(Gln) + L-glutamate + ADP + phosphate + H(+). Functionally, allows the formation of correctly charged Gln-tRNA(Gln) through the transamidation of misacylated Glu-tRNA(Gln) in organisms which lack glutaminyl-tRNA synthetase. The reaction takes place in the presence of glutamine and ATP through an activated gamma-phospho-Glu-tRNA(Gln). The protein is Glutamyl-tRNA(Gln) amidotransferase subunit A of Bordetella pertussis (strain Tohama I / ATCC BAA-589 / NCTC 13251).